The sequence spans 126 residues: Small nuclear ribonucleoprotein Sm D3 (126 aa).

Serine 2 carries the N-acetylserine modification. Residues 5–77 (VPIKVLHEAE…IRFLILPDML (73 aa)) form the Sm domain. 5 repeat units span residues 110 to 111 (RG), 112 to 113 (RG), 114 to 115 (RG), 116 to 117 (MG), and 118 to 119 (RG). A 5 X 2 AA tandem repeats of [RM]-G; required for interaction with SMN1 region spans residues 110 to 119 (RGRGRGMGRG).

Belongs to the snRNP core protein family. As to quaternary structure, core component of the spliceosomal U1, U2, U4 and U5 small nuclear ribonucleoproteins (snRNPs), the building blocks of the spliceosome. Most spliceosomal snRNPs contain a common set of Sm proteins, SNRPB, SNRPD1, SNRPD2, SNRPD3, SNRPE, SNRPF and SNRPG that assemble in a heptameric protein ring on the Sm site of the small nuclear RNA to form the core snRNP. Component of the U1 snRNP. The U1 snRNP is composed of the U1 snRNA and the 7 core Sm proteins SNRPB, SNRPD1, SNRPD2, SNRPD3, SNRPE, SNRPF and SNRPG, and at least three U1 snRNP-specific proteins SNRNP70/U1-70K, SNRPA/U1-A and SNRPC/U1-C. Component of the U4/U6-U5 tri-snRNP complex composed of the U4, U6 and U5 snRNAs and at least PRPF3, PRPF4, PRPF6, PRPF8, PRPF31, SNRNP200, TXNL4A, SNRNP40, SNRPB, SNRPD1, SNRPD2, SNRPD3, SNRPE, SNRPF, SNRPG, DDX23, CD2BP2, PPIH, SNU13, EFTUD2, SART1 and USP39, plus LSM2, LSM3, LSM4, LSM5, LSM6, LSM7 and LSM8. Component of the U7 snRNP complex, or U7 Sm protein core complex, that is composed of the U7 snRNA and at least LSM10, LSM11, SNRPB, SNRPD3, SNRPE, SNRPF and SNRPG; the complex does not contain SNRPD1 and SNRPD2. Component of the minor spliceosome, which splices U12-type introns. Part of the SMN-Sm complex that contains SMN1, GEMIN2/SIP1, DDX20/GEMIN3, GEMIN4, GEMIN5, GEMIN6, GEMIN7, GEMIN8, STRAP/UNRIP and the Sm proteins SNRPB, SNRPD1, SNRPD2, SNRPD3, SNRPE, SNRPF and SNRPG; catalyzes core snRNPs assembly. Forms a 6S pICln-Sm complex composed of CLNS1A/pICln, SNRPD1, SNRPD2, SNRPE, SNRPF and SNRPG; ring-like structure where CLNS1A/pICln mimics additional Sm proteins and which is unable to assemble into the core snRNP. Interacts (via C-terminus) with SMN1 (via Tudor domain); the interaction is direct. Post-translationally, methylated on arginine residues by PRMT5 and PRMT7; probable asymmetric dimethylation which is required for assembly and biogenesis of snRNPs.

The protein localises to the cytoplasm. It is found in the cytosol. The protein resides in the nucleus. Its function is as follows. Plays a role in pre-mRNA splicing as a core component of the spliceosomal U1, U2, U4 and U5 small nuclear ribonucleoproteins (snRNPs), the building blocks of the spliceosome. Component of both the pre-catalytic spliceosome B complex and activated spliceosome C complexes. As a component of the minor spliceosome, involved in the splicing of U12-type introns in pre-mRNAs. As part of the U7 snRNP it is involved in histone pre-mRNA 3'-end processing. In Homo sapiens (Human), this protein is Small nuclear ribonucleoprotein Sm D3 (SNRPD3).